We begin with the raw amino-acid sequence, 520 residues long: Intermediate filament protein ON3 (520 aa).

Low complexity predominate over residues 1-27 (MSYTKKTSYSVKSSSSGSVPRSFSSMS). The tract at residues 1–33 (MSYTKKTSYSVKSSSSGSVPRSFSSMSYSGPSV) is disordered. Residues 1 to 108 (MSYTKKTSYS…DPNIQVVRTQ (108 aa)) form a head region. The coil 1A stretch occupies residues 109–144 (EKEQMKSLNNRFASFIDKVRFLEQQNKMLETKWSLL). An IF rod domain is found at 109–420 (EKEQMKSLNN…KLLEGEEDRL (312 aa)). The interval 145 to 157 (QNQTATRSNIDAM) is linker 1. The interval 158-253 (FEAYINNLRR…QIFEEEIREL (96 aa)) is coil 1B. Positions 254–273 (QSQIKDTSVVVEMDNSRNLD) are linker 12. The segment at 274–420 (MDAIVAEVRA…KLLEGEEDRL (147 aa)) is coil 2. Positions 421–520 (LSGIKSVNIS…VSESSEVVQD (100 aa)) are tail.

Belongs to the intermediate filament family.

Functionally, one of the non-neuronal predominant intermediate filament proteins of the visual pathway. This is Intermediate filament protein ON3 from Carassius auratus (Goldfish).